The sequence spans 1249 residues: Minor capsid protein M1249L (1249 aa).

It belongs to the asfivirus M1249L family. In terms of assembly, interacts with the minor capsid protein p17 and with the hexon capsid protein p72 capsomers; these interactions form a rigid zipper structure that stabilizes the capsomers. Interacts with host IRF3.

It localises to the virion. It is found in the host cytoplasm. Together with the penton and the other minor capsid proteins (p17, p49), forms a complicated network immediately below the outer capsid shell, stabilizing the whole capsid. In addition, blocks IFN-beta transactivation mediated by the cGAS-STING pathway and regulates the transcriptional activity of IFN-beta. Mechanistically, suppresses the phosphorylation of host key adapter protein TBK1 and degrades host IRF3 in the cytoplasm. This is Minor capsid protein M1249L from African swine fever virus (isolate Tick/Malawi/Lil 20-1/1983) (ASFV).